The primary structure comprises 317 residues: DNA-directed RNA polymerase III subunit RPC6 (317 aa).

This sequence belongs to the eukaryotic RPC34/RPC39 RNA polymerase subunit family. As to quaternary structure, component of the RNA polymerase III (Pol III) complex consisting of 17 subunits. Interacts with BRF1/TDS4.

It localises to the nucleus. Its function is as follows. DNA-dependent RNA polymerase catalyzes the transcription of DNA into RNA using the four ribonucleoside triphosphates as substrates. Specific peripheric component of RNA polymerase III which synthesizes small RNAs, such as 5S rRNA and tRNAs. Involved in recruitment of Pol III to the preinitiation complex. Involved in the configuration of an initiation-competent form of RNA polymerase. The protein is DNA-directed RNA polymerase III subunit RPC6 (RPC34) of Saccharomyces cerevisiae (strain ATCC 204508 / S288c) (Baker's yeast).